A 117-amino-acid polypeptide reads, in one-letter code: MNKKETRLRRARKTRAKLAELKAVRLAVFRTNCHIYAQVISGCGSRVLAAASTVESAVRSQVANGGNKQAAEVVGKLIAERAKAAGIETVAFDRSGFLYHGRVKALAEAAREGGLKF.

It belongs to the universal ribosomal protein uL18 family. In terms of assembly, part of the 50S ribosomal subunit; part of the 5S rRNA/L5/L18/L25 subcomplex. Contacts the 5S and 23S rRNAs.

In terms of biological role, this is one of the proteins that bind and probably mediate the attachment of the 5S RNA into the large ribosomal subunit, where it forms part of the central protuberance. The sequence is that of Large ribosomal subunit protein uL18 from Azoarcus sp. (strain BH72).